A 106-amino-acid polypeptide reads, in one-letter code: UPF0145 protein APJL_0492 (106 aa).

It belongs to the UPF0145 family.

This chain is UPF0145 protein APJL_0492, found in Actinobacillus pleuropneumoniae serotype 3 (strain JL03).